The primary structure comprises 211 residues: Urease accessory protein UreG (211 aa).

11-18 is a binding site for GTP; it reads GPVGAGKT.

This sequence belongs to the SIMIBI class G3E GTPase family. UreG subfamily. In terms of assembly, homodimer. UreD, UreF and UreG form a complex that acts as a GTP-hydrolysis-dependent molecular chaperone, activating the urease apoprotein by helping to assemble the nickel containing metallocenter of UreC. The UreE protein probably delivers the nickel.

The protein localises to the cytoplasm. Functionally, facilitates the functional incorporation of the urease nickel metallocenter. This process requires GTP hydrolysis, probably effectuated by UreG. The polypeptide is Urease accessory protein UreG (Actinobacillus pleuropneumoniae serotype 5b (strain L20)).